The sequence spans 307 residues: 2-dehydropantoate 2-reductase (307 aa).

NADP(+) is bound by residues 7 to 12, Asn102, and Ala128; that span reads GSGAMG. Position 102 (Asn102) interacts with substrate. Lys184 functions as the Proton donor in the catalytic mechanism. Substrate contacts are provided by Asn188, Asn192, and Ser255. NADP(+) is bound at residue Glu268.

The protein belongs to the ketopantoate reductase family.

It localises to the cytoplasm. It carries out the reaction (R)-pantoate + NADP(+) = 2-dehydropantoate + NADPH + H(+). Its pathway is cofactor biosynthesis; (R)-pantothenate biosynthesis; (R)-pantoate from 3-methyl-2-oxobutanoate: step 2/2. Functionally, catalyzes the NADPH-dependent reduction of ketopantoate into pantoic acid. The protein is 2-dehydropantoate 2-reductase (apbA) of Streptococcus pyogenes serotype M1.